The primary structure comprises 354 residues: UPF0283 membrane protein Meso_1416 (354 aa).

A disordered region spans residues 1-28 (MSEPRRPAAFRIEPAPSPSPEATREDVR). 2 helical membrane passes run 71-91 (LGAV…GLWA) and 105-125 (LGWL…AIVV).

Belongs to the UPF0283 family.

Its subcellular location is the cell inner membrane. This chain is UPF0283 membrane protein Meso_1416, found in Chelativorans sp. (strain BNC1).